A 761-amino-acid polypeptide reads, in one-letter code: Ribonucleoside-diphosphate reductase subunit alpha (761 aa).

The region spanning L5 to G95 is the ATP-cone domain. ATP-binding positions include K9, E15–K21, T55, and K91. T209 is a GDP binding site. The cysteines at positions 225 and 462 are disulfide-linked. DTTP contacts are provided by residues D232–L234, R262, and R269. N437 serves as a coordination point for GDP. The active-site Proton acceptor is N437. C439 (cysteine radical intermediate) is an active-site residue. GDP-binding positions include E441 and E623–S625. E441 (proton acceptor) is an active-site residue.

Belongs to the ribonucleoside diphosphate reductase large chain family. In terms of assembly, tetramer of two alpha and two beta subunits.

The catalysed reaction is a 2'-deoxyribonucleoside 5'-diphosphate + [thioredoxin]-disulfide + H2O = a ribonucleoside 5'-diphosphate + [thioredoxin]-dithiol. Under complex allosteric control mediated by deoxynucleoside triphosphates and ATP binding to separate specificity and activation sites on the alpha subunit. The type of nucleotide bound at the specificity site determines substrate preference. It seems probable that ATP makes the enzyme reduce CDP and UDP, dGTP favors ADP reduction and dTTP favors GDP reduction. Stimulated by ATP and inhibited by dATP binding to the activity site. Provides the precursors necessary for DNA synthesis. Catalyzes the biosynthesis of deoxyribonucleotides from the corresponding ribonucleotides. This Buchnera aphidicola subsp. Baizongia pistaciae (strain Bp) protein is Ribonucleoside-diphosphate reductase subunit alpha (nrdA).